The primary structure comprises 438 residues: UDP-N-acetylmuramoylalanine--D-glutamate ligase (438 aa).

Residue 112–118 (GSNGKST) participates in ATP binding.

Belongs to the MurCDEF family.

It is found in the cytoplasm. It catalyses the reaction UDP-N-acetyl-alpha-D-muramoyl-L-alanine + D-glutamate + ATP = UDP-N-acetyl-alpha-D-muramoyl-L-alanyl-D-glutamate + ADP + phosphate + H(+). Its pathway is cell wall biogenesis; peptidoglycan biosynthesis. Functionally, cell wall formation. Catalyzes the addition of glutamate to the nucleotide precursor UDP-N-acetylmuramoyl-L-alanine (UMA). The polypeptide is UDP-N-acetylmuramoylalanine--D-glutamate ligase (Sodalis glossinidius (strain morsitans)).